Here is a 1100-residue protein sequence, read N- to C-terminus: Regulator of nonsense transcripts 1 (1100 aa).

The segment covering 42–53 has biased composition (low complexity); it reads SQTQTQGQTQSQ. Positions 42–67 are disordered; sequence SQTQTQGQTQSQLDNQVNGPDGVLPN. Positions 94 to 251 constitute a Upf1 CH-rich domain; it reads TKDLPVHACS…NKLEELWKEN (158 aa). Cysteine 102, cysteine 105, cysteine 116, serine 119, cysteine 124, histidine 134, histidine 138, cysteine 144, cysteine 162, cysteine 165, cysteine 188, and cysteine 192 together coordinate Zn(2+). The C3H stretch occupies residues 102-134; that stretch reads CSYCGIHDPACVVYCNTSKKWFCNGRGNTSGSH. The interval 116 to 144 is CC/SHH/C; it reads CNTSKKWFCNGRGNTSGSHIVNHLVRAKC. The interval 162–192 is C4; it reads CYNCGCRNVFLLGFIPAKADSVVVLLCRQPC. ATP contacts are provided by residues glutamine 455, 475–479, glutamine 645, tyrosine 682, and glutamate 813; that span reads GTGKT. The disordered stretch occupies residues 978-1065; that stretch reads LGQVNGPAAG…QPELSQDSYL (88 aa). Residues 982-993 show a composition bias toward low complexity; sequence NGPAAGRGAPKG. Over residues 1012 to 1063 the composition is skewed to polar residues; that stretch reads SGQPNMPNSQASQDLVSQPFSQGPLTQGYITMSQPSQMSQPGLSQPELSQDS.

This sequence belongs to the DNA2/NAM7 helicase family.

It localises to the cytoplasm. The protein localises to the P-body. It is found in the nucleus. Its subcellular location is the perinuclear region. Its function is as follows. RNA-dependent helicase and ATPase required for nonsense-mediated decay (NMD) of mRNAs containing premature stop codons. Is recruited to mRNAs upon translation termination and undergoes a cycle of phosphorylation and dephosphorylation; its phosphorylation appears to be a key step in NMD. The formation of an upf1-upf2-upf3 surveillance complex is believed to activate NMD. The polypeptide is Regulator of nonsense transcripts 1 (Danio rerio (Zebrafish)).